The sequence spans 145 residues: Deoxyuridine 5'-triphosphate nucleotidohydrolase (145 aa).

The protein belongs to the dUTPase family. Mg(2+) serves as cofactor.

The enzyme catalyses dUTP + H2O = dUMP + diphosphate + H(+). This enzyme is involved in nucleotide metabolism: it produces dUMP, the immediate precursor of thymidine nucleotides and it decreases the intracellular concentration of dUTP so that uracil cannot be incorporated into DNA. The sequence is that of Deoxyuridine 5'-triphosphate nucleotidohydrolase (DUT) from Fowlpox virus (strain NVSL) (FPV).